Consider the following 182-residue polypeptide: ATP synthase subunit b (182 aa).

Residues 25–45 (VVLAGFAVLFYIVVKFVVPMF) traverse the membrane as a helical segment.

This sequence belongs to the ATPase B chain family. In terms of assembly, F-type ATPases have 2 components, F(1) - the catalytic core - and F(0) - the membrane proton channel. F(1) has five subunits: alpha(3), beta(3), gamma(1), delta(1), epsilon(1). F(0) has three main subunits: a(1), b(2) and c(10-14). The alpha and beta chains form an alternating ring which encloses part of the gamma chain. F(1) is attached to F(0) by a central stalk formed by the gamma and epsilon chains, while a peripheral stalk is formed by the delta and b chains.

It localises to the cell membrane. In terms of biological role, f(1)F(0) ATP synthase produces ATP from ADP in the presence of a proton or sodium gradient. F-type ATPases consist of two structural domains, F(1) containing the extramembraneous catalytic core and F(0) containing the membrane proton channel, linked together by a central stalk and a peripheral stalk. During catalysis, ATP synthesis in the catalytic domain of F(1) is coupled via a rotary mechanism of the central stalk subunits to proton translocation. Functionally, component of the F(0) channel, it forms part of the peripheral stalk, linking F(1) to F(0). The protein is ATP synthase subunit b of Arthrobacter sp. (strain FB24).